A 208-amino-acid chain; its full sequence is MAKNYYDITLALAGICQSARLVQQLAHEGQCDNDALNTVLRGLLQTNPSSTLAVYGDTEQVLKMGLETLQSVLNANRQGEAAELTRYTLSLMVLERKLSASKSAMNTLGERISQLDRQLAHFDLESETMMSSLASIYVDVVSPLGPRIQVTGSPAILQSPLVQAKVRATLLAGIRSAVLWQQVGGSRLQLMFSRNRLFKQAQSILAHT.

Belongs to the HflD family.

Its subcellular location is the cytoplasm. It is found in the cell inner membrane. This chain is High frequency lysogenization protein HflD homolog, found in Yersinia pestis bv. Antiqua (strain Nepal516).